The chain runs to 558 residues: Two-component response regulator-like APRR5 (558 aa).

The Response regulatory domain occupies 51-169; sequence RVLLVEADDS…ELRNLWQHVW (119 aa). Residues 180–233 are disordered; it reads FPWNESVGQQKAEGASANNSNGKRDDHVVSGNGGDAQSSCTRPEMEGESADVEV. A coiled-coil region spans residues 240–260; it reads QMECAKSQFNETRLLANELQS. Disordered regions lie at residues 297 to 319 and 535 to 558; these read SLRRPNASENQSSGDRPSLHPSS and KKLAEQRPRIKGQFVRQVQSTQAP. Polar residues predominate over residues 303 to 319; that stretch reads ASENQSSGDRPSLHPSS. Residues 509–551 enclose the CCT domain; sequence REAALTKFRMKRKDRCYEKKVRYESRKKLAEQRPRIKGQFVRQ.

The protein belongs to the ARR-like family. As to quaternary structure, interacts with ADO1 and ADO2. Interacts with SPY (via N-terminus). Phosphorylation varies throughout the diurnal cycle and enhances ADO1 binding. Post-translationally, O-fucosylated by SPY. O-fucosylation promotes APRR5 proteolysis.

It localises to the nucleus. Its function is as follows. Transcriptional repressor of CCA1 and LHY, thereby controlling photoperiodic flowering response. Involved in the positive and negative feedback loops of the circadian clock. With RVE8, forms a negative feedback loop of the circadian clock. Expression of several members of the ARR-like family is controlled by circadian rhythm. Proteolytic substrate of the E3 ubiquitin ligase SCF(ADO1) complex. APRR9, APRR7, and APRR5 coordinately act on the upstream region of the target genes to repress their expression from noon until midnight. The particular coordinated sequential expression of APRR9, APRR7, APRR5, APRR3 and APPR1 result to circadian waves that may be at the basis of the endogenous circadian clock. Negative regulator of shade avoidance response. Involved in the inhibition of leaf expansion in shade avoidance response. The protein is Two-component response regulator-like APRR5 (APRR5) of Arabidopsis thaliana (Mouse-ear cress).